We begin with the raw amino-acid sequence, 804 residues long: G-type lectin S-receptor-like serine/threonine-protein kinase At1g61500 (804 aa).

The N-terminal stretch at 1 to 24 is a signal peptide; it reads MMTRFACLHLFTMFLFTLLSGSSS. Positions 25 to 145 constitute a Bulb-type lectin domain; sequence AVITTESPLS…VSERALWQSF (121 aa). Over 25–427 the chain is Extracellular; sequence AVITTESPLS…ELDGNKRKKT (403 aa). N-linked (GlcNAc...) asparagine glycosylation is found at N54, N135, and N237. Residues 279 to 315 form the EGF-like; atypical domain; the sequence is PKKLCDFYGACGPFGLCVMSPSPMCKCFRGFVPKSVE. Cystine bridges form between C283–C295 and C289–C303. N-linked (GlcNAc...) asparagine glycans are attached at residues N321, N337, and N376. Residues 334–416 form the PAN domain; it reads CLGNSTGEDA…GELLSIRLAR (83 aa). 2 disulfide bridges follow: C369-C390 and C373-C379. A helical transmembrane segment spans residues 428–448; the sequence is IVASIVSLTLFMILGFTAFGV. At 449–804 the chain is on the cytoplasmic side; that stretch reads WRCRVEHIAH…GMTQSVILGR (356 aa). Residues 491–776 enclose the Protein kinase domain; sequence FSLSNKLGQG…DLPSPKQPTF (286 aa). Residues 497–505 and K519 contribute to the ATP site; that span reads LGQGGFGSV. Phosphoserine is present on residues S525 and S540. The caM-binding stretch occupies residues 580–597; sequence RKRLEIDWPKRFDIIQGI. D616 (proton acceptor) is an active-site residue. Phosphoserine occurs at positions 620 and 633. Position 650 is a phosphothreonine (T650). Residues S693 and S787 each carry the phosphoserine modification.

The protein belongs to the protein kinase superfamily. Ser/Thr protein kinase family.

The protein resides in the cell membrane. The catalysed reaction is L-seryl-[protein] + ATP = O-phospho-L-seryl-[protein] + ADP + H(+). The enzyme catalyses L-threonyl-[protein] + ATP = O-phospho-L-threonyl-[protein] + ADP + H(+). In Arabidopsis thaliana (Mouse-ear cress), this protein is G-type lectin S-receptor-like serine/threonine-protein kinase At1g61500.